The sequence spans 428 residues: U2 small nuclear ribonucleoprotein auxiliary factor 35 kDa subunit-related protein 2-like (428 aa).

Residues Met1–Ala51 form a disordered region. The segment covering Lys23–Arg35 has biased composition (basic residues). Positions Pro42–Ala51 are enriched in acidic residues. At Ser50 the chain carries Phosphoserine. The segment at Glu157–Pro185 adopts a C3H1-type 1 zinc-finger fold. An RRM domain is found at Pro189–Val295. The C3H1-type 2 zinc finger occupies Arg297–Arg324. The segment at Met339 to Thr428 is disordered. A Phosphoserine modification is found at Ser340. Basic and acidic residues predominate over residues Asn351–Ser366. The segment covering Lys367–His377 has biased composition (low complexity). Residue Ser375 is modified to Phosphoserine. Basic residues predominate over residues Ser389 to Arg410. The span at Pro419 to Thr428 shows a compositional bias: polar residues.

Interacts with SF3B1. Interacts with ZCRB1. In terms of tissue distribution, highest expression levels are detected in the brain, and lower expression levels in other tissues like epididymis, testis, bone marrow or muscle. In testis, expressed in both Sertoli and spermatogenic cell.

The protein localises to the nucleus. Functionally, plays a role in splicing of the U12-type introns. Implicated also in removal of U2 introns positioned adjacent to a U12 intron. The protein is U2 small nuclear ribonucleoprotein auxiliary factor 35 kDa subunit-related protein 2-like of Mus musculus (Mouse).